The sequence spans 333 residues: UPF0324 membrane protein WS2204 (333 aa).

Helical transmembrane passes span 4–26 (SIRP…FGLA), 31–53 (FLSL…APWY), 59–81 (IGII…LFGF), 88–110 (LLGV…FTLG), 125–147 (SMLI…ESLS), 154–176 (TAIA…PLVY), 218–240 (VIVK…FTIL), 253–275 (PWFA…PSWL), and 310–332 (ALAL…VKLL).

This sequence belongs to the UPF0324 family.

The protein localises to the cell membrane. The polypeptide is UPF0324 membrane protein WS2204 (Wolinella succinogenes (strain ATCC 29543 / DSM 1740 / CCUG 13145 / JCM 31913 / LMG 7466 / NCTC 11488 / FDC 602W) (Vibrio succinogenes)).